Reading from the N-terminus, the 906-residue chain is Ectonucleotide pyrophosphatase/phosphodiesterase family member 1 (906 aa).

A disordered region spans residues 1-25; that stretch reads MERDGEQAGQGPRHGPAGNGRELES. The Cytoplasmic segment spans residues 1–58; sequence MERDGEQAGQGPRHGPAGNGRELESPAAASLLAPMDLGEEPLEKAERARTAKDPNTYK. Serine 25 carries the phosphoserine modification. A Di-leucine motif motif is present at residues 27–34; sequence AAASLLAP. The helical; Signal-anchor for type II membrane protein transmembrane segment at 59–79 threads the bilayer; the sequence is VLSLVLSVCVLTTILGCIFGL. At 80–906 the chain is on the extracellular side; it reads KPSCAKEVKS…THLPIFSQED (827 aa). 2 consecutive SMB domains span residues 86-126 and 127-170; these read EVKS…VEPT and HIWT…QEKK. Intrachain disulfides connect cysteine 90/cysteine 104, cysteine 94/cysteine 122, cysteine 102/cysteine 115, cysteine 108/cysteine 114, cysteine 131/cysteine 148, cysteine 136/cysteine 166, cysteine 146/cysteine 159, cysteine 152/cysteine 158, cysteine 177/cysteine 223, and cysteine 185/cysteine 397. The N-linked (GlcNAc...) asparagine glycan is linked to asparagine 161. The phosphodiesterase stretch occupies residues 173-573; that stretch reads VEEACETIDA…APNNESHGSL (401 aa). Residues aspartate 200, threonine 238, and asparagine 259 each contribute to the AMP site. Residues aspartate 200 and threonine 238 each coordinate Zn(2+). Threonine 238 serves as the catalytic AMP-threonine intermediate. The CMP site is built by threonine 238 and asparagine 259. The dTMP site is built by threonine 238 and asparagine 259. Positions 238 and 259 each coordinate GMP. The residue at position 238 (threonine 238) is a Phosphothreonine. Asparagine 267 carries N-linked (GlcNAc...) asparagine glycosylation. 3 residues coordinate GMP: leucine 272, lysine 277, and tyrosine 322. 2 residues coordinate AMP: lysine 277 and tyrosine 322. 2 residues coordinate CMP: lysine 277 and tyrosine 322. DTMP is bound at residue tyrosine 322. An N-linked (GlcNAc...) asparagine glycan is attached at asparagine 323. Aspartate 358 serves as a coordination point for AMP. Zn(2+)-binding residues include aspartate 358, histidine 362, aspartate 405, and histidine 406. Position 358 (aspartate 358) interacts with CMP. A dTMP-binding site is contributed by aspartate 358. GMP is bound at residue aspartate 358. Histidine 362 serves as a coordination point for 2',3'-cGAMP. Histidine 406 serves as a coordination point for AMP. Histidine 406 is a binding site for CMP. Residue histidine 406 participates in dTMP binding. Histidine 406 is a binding site for GMP. Intrachain disulfides connect cysteine 413–cysteine 512, cysteine 462–cysteine 849, cysteine 596–cysteine 653, cysteine 607–cysteine 707, cysteine 609–cysteine 692, and cysteine 819–cysteine 829. N-linked (GlcNAc...) asparagine glycosylation is present at asparagine 459. 2',3'-cGAMP is bound at residue serine 514. Position 517 (histidine 517) interacts with AMP. Position 517 (histidine 517) interacts with Zn(2+). Residue histidine 517 coordinates CMP. Position 517 (histidine 517) interacts with dTMP. GMP is bound at residue histidine 517. Asparagine 567 and asparagine 624 each carry an N-linked (GlcNAc...) asparagine glycan. The interval 579–628 is linker; sequence KPIYTPSHPKEESFLSQCPIKSVSSDLGCTCDPSIVPIMDFEKQFNLTTD. The nuclease-like domain stretch occupies residues 635–906; sequence SMTVPNGRPR…THLPIFSQED (272 aa). Ca(2+) is bound by residues aspartate 781, aspartate 783, aspartate 785, arginine 787, and aspartate 789.

This sequence belongs to the nucleotide pyrophosphatase/phosphodiesterase family. As to quaternary structure, ectonucleotide pyrophosphatase/phosphodiesterase family member 1: Homodimer. Ectonucleotide pyrophosphatase/phosphodiesterase family member 1: Interacts with INSR; leading to inhibit INSR autophosphorylation and subsequent activation of INSR kinase activity. Ectonucleotide pyrophosphatase/phosphodiesterase family member 1, secreted form: Monomeric. Requires Zn(2+) as cofactor. In terms of processing, the secreted form is produced through cleavage at Lys-85 by intracellular processing.

Its subcellular location is the cell membrane. The protein resides in the basolateral cell membrane. It localises to the secreted. It carries out the reaction Hydrolytically removes 5'-nucleotides successively from the 3'-hydroxy termini of 3'-hydroxy-terminated oligonucleotides.. It catalyses the reaction a ribonucleoside 5'-triphosphate + H2O = a ribonucleoside 5'-phosphate + diphosphate + H(+). The enzyme catalyses ATP + H2O = AMP + diphosphate + H(+). The catalysed reaction is UTP + H2O = UMP + diphosphate + H(+). It carries out the reaction GTP + H2O = GMP + diphosphate + H(+). It catalyses the reaction CTP + H2O = CMP + diphosphate + H(+). The enzyme catalyses 2',3'-cGAMP + 2 H2O = GMP + AMP + 2 H(+). The catalysed reaction is P(1),P(4)-bis(5'-adenosyl) tetraphosphate + H2O = AMP + ATP + 2 H(+). It carries out the reaction 3',5'-cyclic AMP + H2O = AMP + H(+). With respect to regulation, at low concentrations of ATP, a phosphorylated intermediate is formed which inhibits further hydrolysis. Functionally, nucleotide pyrophosphatase that generates diphosphate (PPi) and functions in bone mineralization and soft tissue calcification by regulating pyrophosphate levels. PPi inhibits bone mineralization and soft tissue calcification by binding to nascent hydroxyapatite crystals, thereby preventing further growth of these crystals. Preferentially hydrolyzes ATP, but can also hydrolyze other nucleoside 5' triphosphates such as GTP, CTP and UTP to their corresponding monophosphates with release of pyrophosphate, as well as diadenosine polyphosphates, and also 3',5'-cAMP to AMP. May also be involved in the regulation of the availability of nucleotide sugars in the endoplasmic reticulum and Golgi, and the regulation of purinergic signaling. Inhibits ectopic joint calcification and maintains articular chondrocytes by repressing hedgehog signaling; it is however unclear whether hedgehog inhibition is direct or indirect. Appears to modulate insulin sensitivity. Also involved in melanogenesis. Also able to hydrolyze 2',3'-cGAMP (cyclic GMP-AMP), a second messenger that activates TMEM173/STING and triggers type-I interferon production. 2',3'-cGAMP degradation takes place in the lumen or extracellular space, and not in the cytosol where it is produced; the role of 2',3'-cGAMP hydrolysis is therefore unclear. Not able to hydrolyze the 2',3'-cGAMP linkage isomer 3'-3'-cGAMP. The sequence is that of Ectonucleotide pyrophosphatase/phosphodiesterase family member 1 from Rattus norvegicus (Rat).